The sequence spans 505 residues: Buccalin (505 aa).

The signal sequence occupies residues 1 to 25; that stretch reads MAHHRGHRHILLYVSLALSLGLALA. Positions 26-62 are excised as a propeptide; that stretch reads EDATDPSDDTGSFDDVEAVSEEADLDPYSMSQELNKR. Val74 is modified (valine amide). A leucine amide mark is found at Leu88 and Leu102. Gln106 is modified (pyrrolidone carboxylic acid). Ile116 carries the post-translational modification Isoleucine amide. Leucine amide is present on residues Leu129, Leu143, Leu157, Leu171, Leu185, Leu199, Leu213, Leu227, Leu241, Leu254, Leu267, Leu281, Leu294, Leu307, Leu321, and Leu335. Glu349 carries the glutamic acid 1-amide modification. Residues Leu363, Leu377, Leu391, Leu405, Leu419, and Leu433 each carry the leucine amide modification. Isoleucine amide occurs at positions 447 and 461. At Gln465 the chain carries Pyrrolidone carboxylic acid. Positions 472–505 are disordered; sequence SGRLGKRSSSEQEEEDVRQVEKRSTTEEQSSKSL. Leu475 carries the post-translational modification Leucine amide. The segment covering 488–505 has biased composition (basic and acidic residues); it reads VRQVEKRSTTEEQSSKSL. Residues 495–505 constitute a propeptide that is removed on maturation; that stretch reads STTEEQSSKSL.

In terms of tissue distribution, cholinergic motor neuron B15 innervating buccal muscles in Aplysia.

The protein resides in the secreted. Modulatory neuropeptide, acting presynaptically on nerve terminals to inhibit acetylcholine release. The polypeptide is Buccalin (Aplysia californica (California sea hare)).